The sequence spans 354 residues: Histidinol-phosphate aminotransferase (354 aa).

Lys-210 carries the post-translational modification N6-(pyridoxal phosphate)lysine.

This sequence belongs to the class-II pyridoxal-phosphate-dependent aminotransferase family. Histidinol-phosphate aminotransferase subfamily. In terms of assembly, homodimer. It depends on pyridoxal 5'-phosphate as a cofactor.

The catalysed reaction is L-histidinol phosphate + 2-oxoglutarate = 3-(imidazol-4-yl)-2-oxopropyl phosphate + L-glutamate. It participates in amino-acid biosynthesis; L-histidine biosynthesis; L-histidine from 5-phospho-alpha-D-ribose 1-diphosphate: step 7/9. The sequence is that of Histidinol-phosphate aminotransferase from Clostridium botulinum (strain Kyoto / Type A2).